We begin with the raw amino-acid sequence, 495 residues long: F(420)H(2) dehydrogenase subunit M (495 aa).

Transmembrane regions (helical) follow at residues 1 to 21 (MLPV…VTFF), 27 to 47 (LAAG…LYAY), 57 to 77 (MQFY…SVGI), 80 to 100 (VSMP…LFTW), 108 to 128 (NRFY…FVAL), 130 to 150 (FVVF…IVNL), 163 to 183 (FFIY…GLFY), 215 to 235 (IFLA…FHSW), 249 to 269 (ILFI…LPML), 277 to 297 (LMIM…ALLA), 315 to 335 (MGYV…GAMF), 338 to 358 (FSHG…QTAA), 378 to 398 (VAMM…GFIA), 412 to 432 (VFVV…LWAM), and 450 to 470 (INSI…YFGL).

Belongs to the complex I subunit 4 family. As to quaternary structure, the FPO complex is composed of at least 13 different subunits. FpoA, FpoH, FpoJ, FpoK, FpoL, FpoM and FpoN proteins constitute the membrane sector of the complex.

The protein resides in the cell membrane. It catalyses the reaction methanophenazine + reduced coenzyme F420-(gamma-L-Glu)(n) = dihydromethanophenazine + oxidized coenzyme F420-(gamma-L-Glu)(n) + H(+). Its function is as follows. Component of the F(420)H(2) dehydrogenase (FPO complex) which is part of the energy-conserving F(420)H(2):heterodisulfide oxidoreductase system. The membrane-bound electron transfer system of the complex plays an important role in the metabolism of methylotrophic methanogens when the organisms grow on methanol or methylamines. Catalyzes the oxidation of methanophenazine to dihydromethanophenazine. It shuttles electrons from F(420)H(2), via FAD and iron-sulfur (Fe-S) centers, to methanophenazine (an electron carrier in the membrane). It couples the redox reaction to proton translocation (for every two electrons transferred, two hydrogen ions are translocated across the cytoplasmic membrane), and thus conserves the redox energy in a proton gradient. It also catalyzes the oxidation of F(420)H(2) with quinones such as 2,3-dimethyl-1,4-naphthoquinone, 2-methyl-1,4-naphthoquinone and tetramethyl-p-benzoquinone. The chain is F(420)H(2) dehydrogenase subunit M (fpoM) from Methanosarcina mazei (strain ATCC BAA-159 / DSM 3647 / Goe1 / Go1 / JCM 11833 / OCM 88) (Methanosarcina frisia).